We begin with the raw amino-acid sequence, 204 residues long: Urease accessory protein UreG (204 aa).

GTP is bound at residue 12–19 (GPVGSGKT).

It belongs to the SIMIBI class G3E GTPase family. UreG subfamily. In terms of assembly, homodimer. UreD, UreF and UreG form a complex that acts as a GTP-hydrolysis-dependent molecular chaperone, activating the urease apoprotein by helping to assemble the nickel containing metallocenter of UreC. The UreE protein probably delivers the nickel.

It is found in the cytoplasm. In terms of biological role, facilitates the functional incorporation of the urease nickel metallocenter. This process requires GTP hydrolysis, probably effectuated by UreG. This is Urease accessory protein UreG from Pseudomonas fluorescens (strain SBW25).